The primary structure comprises 633 residues: MSSSKSLYELKDLKNSSTEIHATGQDNEIEYFETGSNDRPSSQPHLGYEQHNTSAVRRFFDSFKRADQGPQDEVEATQMNDLTSAISPSSRQAQELEKNESSDNIGANTGHKSDSLKKTIQPRHVLMIALGTGIGTGLLVGNGTALVHAGPAGLLIGYAIMGSILYCIIQACGEMALVYSNLTGGYNAYPSFLVDDGFGFAVAWVYCLQWLCVCPLELVTASMTIKYWTTSVNPDVFVIIFYVLVITINIFGARGYAEAEFFFNCCKILMMTGFFILGIIIDVGGAGNDGFIGGKYWHDPGAFNGKHAIDRFKGVAATLVTAAFAFGGSEFIAITTAEQSNPRKAIPGAAKQMIYRILFLFLATIILLGFLVPYNSDQLLGSTGGGTKASPYVIAVASHGVRVVPHFINAVILLSVLSMANSSFYSSARLFLTLSEQGYAPKVFSYIDRAGRPLIAMGVSALFAVIAFCAASPKEEQVFTWLLAISGLSQLFTWTAICLSHLRFRRAMKVQGRSLGELGFKSQTGVWGSAYACIMMILILIAQFWVAIAPIGEGKLDAQAFFENYLAMPILIALYVGYKVWHKDWKLFIRADKIDLDSHRQIFDEELIKQEDEEYRERLRNGPYWKRVVAFWC.

The Cytoplasmic segment spans residues 1 to 124 (MSSSKSLYEL…SLKKTIQPRH (124 aa)). S6 is subject to Phosphoserine. K11 participates in a covalent cross-link: Glycyl lysine isopeptide (Lys-Gly) (interchain with G-Cter in ubiquitin). 2 disordered regions span residues 32–52 (FETG…EQHN) and 86–116 (ISPS…SDSL). The span at 34–52 (TGSNDRPSSQPHLGYEQHN) shows a compositional bias: polar residues. The chain crosses the membrane as a helical span at residues 125 to 145 (VLMIALGTGIGTGLLVGNGTA). Over 146-148 (LVH) the chain is Extracellular. A helical transmembrane segment spans residues 149–169 (AGPAGLLIGYAIMGSILYCII). Over 170–197 (QACGEMALVYSNLTGGYNAYPSFLVDDG) the chain is Cytoplasmic. A helical transmembrane segment spans residues 198–218 (FGFAVAWVYCLQWLCVCPLEL). Residues 219–231 (VTASMTIKYWTTS) are Extracellular-facing. A helical membrane pass occupies residues 232-252 (VNPDVFVIIFYVLVITINIFG). Topologically, residues 253-260 (ARGYAEAE) are cytoplasmic. Residues 261–281 (FFFNCCKILMMTGFFILGIII) form a helical membrane-spanning segment. Topologically, residues 282–313 (DVGGAGNDGFIGGKYWHDPGAFNGKHAIDRFK) are extracellular. Residues 314-334 (GVAATLVTAAFAFGGSEFIAI) traverse the membrane as a helical segment. Residues 335–352 (TTAEQSNPRKAIPGAAKQ) lie on the Cytoplasmic side of the membrane. A helical membrane pass occupies residues 353–373 (MIYRILFLFLATIILLGFLVP). Residues 374–402 (YNSDQLLGSTGGGTKASPYVIAVASHGVR) are Extracellular-facing. A helical membrane pass occupies residues 403–425 (VVPHFINAVILLSVLSMANSSFY). Residues 426–452 (SSARLFLTLSEQGYAPKVFSYIDRAGR) lie on the Cytoplasmic side of the membrane. Residues 453 to 473 (PLIAMGVSALFAVIAFCAASP) traverse the membrane as a helical segment. Residues 474 to 477 (KEEQ) are Extracellular-facing. Residues 478–498 (VFTWLLAISGLSQLFTWTAIC) traverse the membrane as a helical segment. Over 499–531 (LSHLRFRRAMKVQGRSLGELGFKSQTGVWGSAY) the chain is Cytoplasmic. A helical membrane pass occupies residues 532-552 (ACIMMILILIAQFWVAIAPIG). Topologically, residues 553 to 560 (EGKLDAQA) are extracellular. Residues 561 to 581 (FFENYLAMPILIALYVGYKVW) traverse the membrane as a helical segment. At 582–633 (HKDWKLFIRADKIDLDSHRQIFDEELIKQEDEEYRERLRNGPYWKRVVAFWC) the chain is on the cytoplasmic side. Residue C633 is the site of S-palmitoyl cysteine attachment.

The protein belongs to the amino acid-polyamine-organocation (APC) superfamily. YAT (TC 2.A.3.10) family. In terms of processing, palmitoylated by PFA4.

It localises to the cell membrane. Broad substrate range permease which transports asparagine and glutamine with intermediate specificity. Also transports Ala, Cys, Gly, Ile, Leu, Met, Phe, Ser, Thr, Tyr and Val. Important for the utilization of amino acids as a nitrogen source. This is General amino acid permease AGP1 (AGP1) from Saccharomyces cerevisiae (strain ATCC 204508 / S288c) (Baker's yeast).